The following is an 83-amino-acid chain: Mu-theraphotoxin-Hhn2n (83 aa).

The first 21 residues, 1 to 21 (MKASMYLALAGLVLLFVVGYA), serve as a signal peptide directing secretion. Residues 22 to 48 (SESEEKEFPRELLSKIFAVDDFKGEER) constitute a propeptide that is removed on maturation. Intrachain disulfides connect Cys50–Cys65, Cys57–Cys70, and Cys64–Cys77. Leu81 is modified (leucine amide).

Belongs to the neurotoxin 10 (Hwtx-1) family. 15 (Hntx-3) subfamily. As to quaternary structure, monomer. Expressed by the venom gland.

It is found in the secreted. Lethal neurotoxin. Selectively blocks tetrodotoxin-sensitive voltage-gated sodium channels (Nav). Does not affect tetrodotoxin-resistant voltage-gated sodium channels or calcium channels. In Cyriopagopus hainanus (Chinese bird spider), this protein is Mu-theraphotoxin-Hhn2n.